The chain runs to 350 residues: Biotin synthase 1 (350 aa).

Residues 71 to 296 form the Radical SAM core domain; that stretch reads EEVEVEGIIS…KTILRFAGGR (226 aa). [4Fe-4S] cluster-binding residues include C86, C90, and C93. The [2Fe-2S] cluster site is built by C129, C221, and R291.

It belongs to the radical SAM superfamily. Biotin synthase family. As to quaternary structure, homodimer. The cofactor is [4Fe-4S] cluster. [2Fe-2S] cluster is required as a cofactor.

It carries out the reaction (4R,5S)-dethiobiotin + (sulfur carrier)-SH + 2 reduced [2Fe-2S]-[ferredoxin] + 2 S-adenosyl-L-methionine = (sulfur carrier)-H + biotin + 2 5'-deoxyadenosine + 2 L-methionine + 2 oxidized [2Fe-2S]-[ferredoxin]. It functions in the pathway cofactor biosynthesis; biotin biosynthesis; biotin from 7,8-diaminononanoate: step 2/2. Functionally, catalyzes the conversion of dethiobiotin (DTB) to biotin by the insertion of a sulfur atom into dethiobiotin via a radical-based mechanism. The protein is Biotin synthase 1 of Corynebacterium diphtheriae (strain ATCC 700971 / NCTC 13129 / Biotype gravis).